We begin with the raw amino-acid sequence, 78 residues long: UPF0154 protein lp_2061 (78 aa).

A helical transmembrane segment spans residues 5–27 (TGIWILIVVIGVLVGLTGGFFGA).

Belongs to the UPF0154 family.

It localises to the membrane. The chain is UPF0154 protein lp_2061 from Lactiplantibacillus plantarum (strain ATCC BAA-793 / NCIMB 8826 / WCFS1) (Lactobacillus plantarum).